Consider the following 366-residue polypeptide: RNA 3'-terminal phosphate cyclase (366 aa).

ATP is bound by residues Gln104, Pro131, Tyr294, Asp297, Gln298, and His320. His320 functions as the Tele-AMP-histidine intermediate in the catalytic mechanism.

Belongs to the RNA 3'-terminal cyclase family. Type 1 subfamily.

The protein resides in the nucleus. It localises to the nucleoplasm. It carries out the reaction a 3'-end 3'-phospho-ribonucleotide-RNA + ATP = a 3'-end 2',3'-cyclophospho-ribonucleotide-RNA + AMP + diphosphate. Catalyzes the conversion of 3'-phosphate to a 2',3'-cyclic phosphodiester at the end of RNA. The mechanism of action of the enzyme occurs in 3 steps: (A) adenylation of the enzyme by ATP; (B) transfer of adenylate to an RNA-N3'P to produce RNA-N3'PP5'A; (C) and attack of the adjacent 2'-hydroxyl on the 3'-phosphorus in the diester linkage to produce the cyclic end product. Likely functions in some aspects of cellular RNA processing. Function plays an important role in regulating axon regeneration by inhibiting central nervous system (CNS) axon regeneration following optic nerve injury. This chain is RNA 3'-terminal phosphate cyclase (RTCA), found in Bos taurus (Bovine).